The sequence spans 128 residues: Aspartate 1-decarboxylase (128 aa).

The active-site Schiff-base intermediate with substrate; via pyruvic acid is serine 25. Serine 25 carries the post-translational modification Pyruvic acid (Ser). Substrate is bound at residue threonine 57. Tyrosine 58 serves as the catalytic Proton donor. 73–75 (GSA) contributes to the substrate binding site.

It belongs to the PanD family. In terms of assembly, heterooctamer of four alpha and four beta subunits. Requires pyruvate as cofactor. Post-translationally, is synthesized initially as an inactive proenzyme, which is activated by self-cleavage at a specific serine bond to produce a beta-subunit with a hydroxyl group at its C-terminus and an alpha-subunit with a pyruvoyl group at its N-terminus.

It is found in the cytoplasm. It carries out the reaction L-aspartate + H(+) = beta-alanine + CO2. It participates in cofactor biosynthesis; (R)-pantothenate biosynthesis; beta-alanine from L-aspartate: step 1/1. Catalyzes the pyruvoyl-dependent decarboxylation of aspartate to produce beta-alanine. This Burkholderia mallei (strain NCTC 10247) protein is Aspartate 1-decarboxylase.